The sequence spans 49 residues: Chitin-binding lectin (49 aa).

The Chitin-binding type-1 domain maps to 2–45 (DHRCGREATPPGKLCNDGRCCSQWGWCGTTQAYCSGKCQSQCDC). 4 disulfide bridges follow: Cys5–Cys22, Cys16–Cys28, Cys21–Cys35, and Cys39–Cys43.

As to quaternary structure, homodimer; disulfide-linked.

Its function is as follows. Chitin-binding lectin which is specific for N-acetylglucosamine oligomers. The polypeptide is Chitin-binding lectin (Viscum album (European mistletoe)).